Consider the following 379-residue polypeptide: Alpha-humulene synthase eupE (379 aa).

The protein belongs to the terpene synthase family. Alpha-humulene synthase eupE subfamily. It depends on Mg(2+) as a cofactor.

It catalyses the reaction (2E,6E)-farnesyl diphosphate = alpha-humulene + diphosphate. It functions in the pathway secondary metabolite biosynthesis; terpenoid biosynthesis. Its function is as follows. Alpha-humulene synthase; part of the gene cluster that mediates the biosynthesis of eupenifeldin, a bistropolone meroterpenoid that acts as an antitumor agent. The first step of eupenifeldin biosynthesis is the biosynthesis of 3-methylorcinaldehyde performed by the non-reducing polyketide synthase eupA. Oxidative dearomatization of 3-methylorcinaldehyde likely catalyzed by the FAD-dependent monooxygenase eupB is followed by oxidative ring expansion by the 2-oxoglutarate-dependent dioxygenase eupC to provide the first tropolone metabolite, tropolone stipitaldehyde. In parallel, generation of sesquiterpene alpha-humulene from farnesylpyrophosphate (FPP) is catalyzed by the terpene cyclase eupE. The cytochrome P450 monooxygenase eupD then hydroxylates humulene to humulenol. The putative Diels-Alderase eupF probably catalyzes the formation of the tropolone-humulene skeleton by linking humulenol and the polyketide moiety. The short-chain dehydrogenase/reductase eupG and the flavin-dependent monooxygenase eupH are also essential for eupenifeldin biosynthesis and are likely the additional decorating enzymes of the tropolone-humulene skeleton to produce final eupenifeldin or derivatives. The polypeptide is Alpha-humulene synthase eupE (Phoma sp).